We begin with the raw amino-acid sequence, 374 residues long: UDP-N-acetylglucosamine--N-acetylmuramyl-(pentapeptide) pyrophosphoryl-undecaprenol N-acetylglucosamine transferase (374 aa).

UDP-N-acetyl-alpha-D-glucosamine-binding positions include T13–G15, N124, R165, S193, and Q294.

Belongs to the glycosyltransferase 28 family. MurG subfamily.

The protein localises to the cell inner membrane. It carries out the reaction di-trans,octa-cis-undecaprenyl diphospho-N-acetyl-alpha-D-muramoyl-L-alanyl-D-glutamyl-meso-2,6-diaminopimeloyl-D-alanyl-D-alanine + UDP-N-acetyl-alpha-D-glucosamine = di-trans,octa-cis-undecaprenyl diphospho-[N-acetyl-alpha-D-glucosaminyl-(1-&gt;4)]-N-acetyl-alpha-D-muramoyl-L-alanyl-D-glutamyl-meso-2,6-diaminopimeloyl-D-alanyl-D-alanine + UDP + H(+). Its pathway is cell wall biogenesis; peptidoglycan biosynthesis. Cell wall formation. Catalyzes the transfer of a GlcNAc subunit on undecaprenyl-pyrophosphoryl-MurNAc-pentapeptide (lipid intermediate I) to form undecaprenyl-pyrophosphoryl-MurNAc-(pentapeptide)GlcNAc (lipid intermediate II). The protein is UDP-N-acetylglucosamine--N-acetylmuramyl-(pentapeptide) pyrophosphoryl-undecaprenol N-acetylglucosamine transferase of Rhizobium meliloti (strain 1021) (Ensifer meliloti).